Consider the following 613-residue polypeptide: Chaperone protein DnaK (613 aa).

The segment at 579 to 613 is disordered; it reads MYQSASSTTQTGSGNQNSSKQENDKTVDAEYKEKS. Low complexity predominate over residues 581–597; the sequence is QSASSTTQTGSGNQNSS. Basic and acidic residues predominate over residues 599–613; it reads QENDKTVDAEYKEKS.

Belongs to the heat shock protein 70 family.

Its function is as follows. Acts as a chaperone. The protein is Chaperone protein DnaK of Thermoplasma volcanium (strain ATCC 51530 / DSM 4299 / JCM 9571 / NBRC 15438 / GSS1).